Consider the following 556-residue polypeptide: Glutamine--tRNA ligase (556 aa).

The 'HIGH' region motif lies at 34-44; that stretch reads PEPNGYLHIGH. ATP contacts are provided by residues 35-37 and 41-47; these read EPN and HIGHAKS. L-glutamine is bound by residues D67 and Y212. ATP contacts are provided by residues T231, 261 to 262, and 269 to 271; these read RL and MSK. The 'KMSKS' region signature appears at 268-272; the sequence is VMSKR.

This sequence belongs to the class-I aminoacyl-tRNA synthetase family. As to quaternary structure, monomer.

It localises to the cytoplasm. The catalysed reaction is tRNA(Gln) + L-glutamine + ATP = L-glutaminyl-tRNA(Gln) + AMP + diphosphate. The protein is Glutamine--tRNA ligase of Vibrio vulnificus (strain YJ016).